A 560-amino-acid chain; its full sequence is Leucine-rich repeat and IQ domain-containing protein 4 (560 aa).

Positions 1–20 (MSKDIKSVEHSPKIHQRNDP) are disordered. 20 LRR repeats span residues 23–47 (VNDR…IFTF), 48–70 (TELE…IQRL), 72–95 (NIRV…LLSS), 97–116 (ESLD…VVSF), 117–140 (LHAL…IFKN), 141–164 (LHHL…IVNQ), 166–187 (KLRE…LCVL), 188–210 (YTLE…IGHL), 212–233 (GLQK…LCQC), 234–256 (SQLS…FAEL), 258–281 (KMTE…RWTS), 283–301 (HLLY…SFRC), 302–325 (LVNL…ICAL), 326–348 (KNLE…LGSL), 350–371 (KLKI…VLSL), 374–397 (LEKL…IRKL), 398–422 (QSLK…SMPN), 424–443 (EVLD…ICQA), 444–466 (QALK…LDSL), and 468–489 (NLKV…VCAE). The 30-residue stretch at 504–533 (RNIMATKIQAWWRGTMVQRGFGKFGELLKP) folds into the IQ domain. Positions 529 to 560 (ELLKPQKKGKTSPKDKKGKKDVKGKPGKGKKK) are disordered. A compositionally biased stretch (basic residues) spans 533–560 (PQKKGKTSPKDKKGKKDVKGKPGKGKKK).

This chain is Leucine-rich repeat and IQ domain-containing protein 4 (LRRIQ4), found in Homo sapiens (Human).